Here is a 418-residue protein sequence, read N- to C-terminus: Cell division protein FtsA (418 aa).

It belongs to the FtsA/MreB family. In terms of assembly, self-interacts. Interacts with FtsZ.

It localises to the cell inner membrane. Cell division protein that is involved in the assembly of the Z ring. May serve as a membrane anchor for the Z ring. The polypeptide is Cell division protein FtsA (Buchnera aphidicola subsp. Acyrthosiphon pisum (strain APS) (Acyrthosiphon pisum symbiotic bacterium)).